The following is a 425-amino-acid chain: Glutamyl-tRNA reductase (425 aa).

Residues 49 to 52 (TCNR), Ser-107, 112 to 114 (EPQ), and Gln-118 contribute to the substrate site. The active-site Nucleophile is the Cys-50. 187–192 (GAGETI) lines the NADP(+) pocket.

Belongs to the glutamyl-tRNA reductase family. As to quaternary structure, homodimer.

It carries out the reaction (S)-4-amino-5-oxopentanoate + tRNA(Glu) + NADP(+) = L-glutamyl-tRNA(Glu) + NADPH + H(+). It functions in the pathway porphyrin-containing compound metabolism; protoporphyrin-IX biosynthesis; 5-aminolevulinate from L-glutamyl-tRNA(Glu): step 1/2. Catalyzes the NADPH-dependent reduction of glutamyl-tRNA(Glu) to glutamate 1-semialdehyde (GSA). The polypeptide is Glutamyl-tRNA reductase (Pseudomonas savastanoi pv. phaseolicola (strain 1448A / Race 6) (Pseudomonas syringae pv. phaseolicola (strain 1448A / Race 6))).